The primary structure comprises 245 residues: MIIPAIDLIDGQVVRLYQGDYEQQTTFNLSPLDQLKSYQAQGANLLHIVDLTGAKDPTKRQTALISELVNHLDTPIQVGGGIRTEAQLNELLEIGVSRVVIGSLAVKEPELVKSWFEKYGNEAICLALDVNINEQGEKIVAVSGWQTGGGKSLESLVEEFKTVDLKHALVTDISRDGTLQGANTELYREIAASYPEIQWQASGGIATLADVNAVKDSGADGIIIGKALLIKQFSVKEAIACWPNA.

The active-site Proton acceptor is the Asp-7. Asp-129 functions as the Proton donor in the catalytic mechanism.

This sequence belongs to the HisA/HisF family.

Its subcellular location is the cytoplasm. The enzyme catalyses 1-(5-phospho-beta-D-ribosyl)-5-[(5-phospho-beta-D-ribosylamino)methylideneamino]imidazole-4-carboxamide = 5-[(5-phospho-1-deoxy-D-ribulos-1-ylimino)methylamino]-1-(5-phospho-beta-D-ribosyl)imidazole-4-carboxamide. It functions in the pathway amino-acid biosynthesis; L-histidine biosynthesis; L-histidine from 5-phospho-alpha-D-ribose 1-diphosphate: step 4/9. The chain is 1-(5-phosphoribosyl)-5-[(5-phosphoribosylamino)methylideneamino] imidazole-4-carboxamide isomerase from Shewanella halifaxensis (strain HAW-EB4).